Consider the following 193-residue polypeptide: Guanylate kinase (193 aa).

The Guanylate kinase-like domain occupies 8–188 (GRLVVLVGPS…ACEQLVSLFV (181 aa)). Residue 15 to 22 (GPSAVGKS) coordinates ATP.

It belongs to the guanylate kinase family.

Its subcellular location is the cytoplasm. It catalyses the reaction GMP + ATP = GDP + ADP. Essential for recycling GMP and indirectly, cGMP. The polypeptide is Guanylate kinase (Nocardia farcinica (strain IFM 10152)).